The chain runs to 337 residues: Ketol-acid reductoisomerase (NADP(+)) (337 aa).

In terms of domain architecture, KARI N-terminal Rossmann spans 1-180 (MFYEKDADVD…GGGKSGIIET (180 aa)). NADP(+) is bound by residues 22–25 (YGSQ), arginine 46, serine 49, serine 51, and 81–84 (DELQ). Histidine 106 is a catalytic residue. Glycine 132 serves as a coordination point for NADP(+). Residues 181–326 (TFKDECETDL…AELRAMMPWI (146 aa)) form the KARI C-terminal knotted domain. The Mg(2+) site is built by aspartate 189, glutamate 193, glutamate 225, and glutamate 229. Serine 250 is a substrate binding site.

Belongs to the ketol-acid reductoisomerase family. Requires Mg(2+) as cofactor.

It carries out the reaction (2R)-2,3-dihydroxy-3-methylbutanoate + NADP(+) = (2S)-2-acetolactate + NADPH + H(+). The enzyme catalyses (2R,3R)-2,3-dihydroxy-3-methylpentanoate + NADP(+) = (S)-2-ethyl-2-hydroxy-3-oxobutanoate + NADPH + H(+). It functions in the pathway amino-acid biosynthesis; L-isoleucine biosynthesis; L-isoleucine from 2-oxobutanoate: step 2/4. It participates in amino-acid biosynthesis; L-valine biosynthesis; L-valine from pyruvate: step 2/4. In terms of biological role, involved in the biosynthesis of branched-chain amino acids (BCAA). Catalyzes an alkyl-migration followed by a ketol-acid reduction of (S)-2-acetolactate (S2AL) to yield (R)-2,3-dihydroxy-isovalerate. In the isomerase reaction, S2AL is rearranged via a Mg-dependent methyl migration to produce 3-hydroxy-3-methyl-2-ketobutyrate (HMKB). In the reductase reaction, this 2-ketoacid undergoes a metal-dependent reduction by NADPH to yield (R)-2,3-dihydroxy-isovalerate. This Pelagibacter ubique (strain HTCC1062) protein is Ketol-acid reductoisomerase (NADP(+)).